The primary structure comprises 146 residues: Hemoglobin subunit beta-2 (146 aa).

The region spanning 2-146 (EWTDFERATI…VVSSLGRQYH (145 aa)) is the Globin domain. The heme b site is built by H63 and H92.

It belongs to the globin family. In terms of assembly, hb 2 is a heterotetramer of two alpha-2 and two beta-2 chains. In terms of tissue distribution, red blood cells.

Functionally, involved in oxygen transport from gills to the various peripheral tissues. The sequence is that of Hemoglobin subunit beta-2 (hbb2) from Gobionotothen gibberifrons (Humped rockcod).